Reading from the N-terminus, the 312-residue chain is Aspartoacylase (312 aa).

Residues H20 and E23 each contribute to the Zn(2+) site. 3 residues coordinate N-acetyl-L-aspartate: R62, N69, and R70. H115 is a binding site for Zn(2+). Residues Y163 and R167 each contribute to the N-acetyl-L-aspartate site. Residue E177 is the Proton donor/acceptor of the active site. Y287 is a binding site for N-acetyl-L-aspartate.

The protein belongs to the AspA/AstE family. Aspartoacylase subfamily. As to quaternary structure, homodimer. Zn(2+) serves as cofactor. In terms of tissue distribution, detected in kidney proximal tubule cells (at protein level).

It localises to the cytoplasm. The protein localises to the nucleus. The catalysed reaction is an N-acyl-L-aspartate + H2O = a carboxylate + L-aspartate. It catalyses the reaction N-acetyl-L-aspartate + H2O = L-aspartate + acetate. Its function is as follows. Catalyzes the deacetylation of N-acetylaspartic acid (NAA) to produce acetate and L-aspartate. NAA occurs in high concentration in brain and its hydrolysis NAA plays a significant part in the maintenance of intact white matter. In other tissues it acts as a scavenger of NAA from body fluids. The chain is Aspartoacylase from Rattus norvegicus (Rat).